The primary structure comprises 61 residues: Arabinogalactan protein 15 (61 aa).

An N-terminal signal peptide occupies residues 1 to 22 (MAISKASIVVLMMVIISVVASA). Position 23 is a pyrrolidone carboxylic acid (Q23). P27, P29, and P31 each carry 4-hydroxyproline. O-linked (Ara...) hydroxyproline glycosylation is found at P27, P29, and P31. S35 is lipidated: GPI-anchor amidated serine. Positions 36 to 61 (SAISASFVSAGVAAVAALVFGSALRI) are cleaved as a propeptide — removed in mature form.

It belongs to the AG-peptide AGP family. Post-translationally, contains 4-hydroxyproline; hydroxylated on Pro-27, Pro-29 and Pro-31. O-glycosylated on hydroxyprolines; noncontiguous hydroxylproline residues are glycosylated with arabinogalactan. In terms of tissue distribution, expressed in reproductive tissues. Expressed in chalaza, funiculus, stigma, septum, style, integument and transmitting tract.

It is found in the cell membrane. Proteoglycan that seems to be implicated in diverse developmental roles such as differentiation, cell-cell recognition, embryogenesis and programmed cell death. This is Arabinogalactan protein 15 from Arabidopsis thaliana (Mouse-ear cress).